The primary structure comprises 92 residues: Acylphosphatase (92 aa).

The Acylphosphatase-like domain maps to 6 to 92 (RAHVYVSGRV…EGVDGFEIRR (87 aa)). Residues arginine 21 and asparagine 39 contribute to the active site.

Belongs to the acylphosphatase family.

It carries out the reaction an acyl phosphate + H2O = a carboxylate + phosphate + H(+). The protein is Acylphosphatase (acyP) of Natronomonas pharaonis (strain ATCC 35678 / DSM 2160 / CIP 103997 / JCM 8858 / NBRC 14720 / NCIMB 2260 / Gabara) (Halobacterium pharaonis).